A 418-amino-acid polypeptide reads, in one-letter code: Tyrosine--tRNA ligase (418 aa).

Residue tyrosine 34 participates in L-tyrosine binding. The short motif at 39–48 is the 'HIGH' region element; the sequence is PTADSLHLGH. L-tyrosine contacts are provided by tyrosine 169 and glutamine 173. The 'KMSKS' region signature appears at 229–233; the sequence is KFGKS. ATP is bound at residue lysine 232. The 67-residue stretch at 352 to 418 folds into the S4 RNA-binding domain; sequence NNIVELLVSS…GKKKYFVLTY (67 aa).

This sequence belongs to the class-I aminoacyl-tRNA synthetase family. TyrS type 1 subfamily. In terms of assembly, homodimer.

Its subcellular location is the cytoplasm. The enzyme catalyses tRNA(Tyr) + L-tyrosine + ATP = L-tyrosyl-tRNA(Tyr) + AMP + diphosphate + H(+). Functionally, catalyzes the attachment of tyrosine to tRNA(Tyr) in a two-step reaction: tyrosine is first activated by ATP to form Tyr-AMP and then transferred to the acceptor end of tRNA(Tyr). This Streptococcus pneumoniae (strain CGSP14) protein is Tyrosine--tRNA ligase.